Here is a 126-residue protein sequence, read N- to C-terminus: Large ribosomal subunit protein bL17 (126 aa).

Belongs to the bacterial ribosomal protein bL17 family. As to quaternary structure, part of the 50S ribosomal subunit. Contacts protein L32.

The polypeptide is Large ribosomal subunit protein bL17 (Laribacter hongkongensis (strain HLHK9)).